We begin with the raw amino-acid sequence, 116 residues long: SPbeta prophage-derived uncharacterized protein YoqA (116 aa).

This is SPbeta prophage-derived uncharacterized protein YoqA (yoqA) from Bacillus subtilis (strain 168).